The following is a 942-amino-acid chain: Nuclear receptor coactivator 7 (942 aa).

Residue Met-1 is modified to N-acetylmethionine. The segment covering 1 to 12 (MDTKEEKKERKQ) has biased composition (basic and acidic residues). Residues 1–46 (MDTKEEKKERKQSYFARLKKKKQAKQNAETASAVATRTHTGKEDNN) form a disordered region. Positions 4–29 (KEEKKERKQSYFARLKKKKQAKQNAE) form a coiled coil. A compositionally biased stretch (polar residues) spans 25–38 (KQNAETASAVATRT). The residue at position 89 (Ser-89) is a Phosphoserine. The 44-residue stretch at 114–157 (MEYTAGNQDTLNSIALKFNITPNKLVELNKLFTHTIVPGQVLFV) folds into the LysM domain. At Thr-134 the chain carries Phosphothreonine. The segment at 161 to 188 (NSPSSTLRLSSSSPGATVSPSSSDAEYD) is disordered. Residues 162–183 (SPSSTLRLSSSSPGATVSPSSS) are compositionally biased toward low complexity. Phosphoserine is present on residues Ser-179, Ser-183, Ser-208, Ser-209, and Ser-211. Residues 324–416 (KFKSINKEKR…ENFLGEDDDF (93 aa)) are disordered. Residues 356–368 (GHTPTKPSGSSVS) are compositionally biased toward polar residues. The segment covering 369 to 381 (EKLKKLDSSRETS) has biased composition (basic and acidic residues). 3 positions are modified to phosphoserine: Ser-441, Ser-500, and Ser-502. Residues 781-942 (ALLENMHIEQ…VQDLEVWAFD (162 aa)) form the TLDc domain.

The protein belongs to the OXR1 family. In terms of assembly, interacts with ESR1, ESR2A, ESR2B, THRB, PPARG and RARA in a ligand-inducible manner. Interacts with the heterodimer AHR-ARNT. Highly expressed in brain. Weakly expressed in mammary gland, ovary, uterus, prostate, stomach, bladder, spinal cord and pancreas. Expressed in cancer cell line.

The protein localises to the nucleus. Functionally, enhances the transcriptional activities of several nuclear receptors. Involved in the coactivation of different nuclear receptors, such as ESR1, THRB, PPARG and RARA. This Homo sapiens (Human) protein is Nuclear receptor coactivator 7 (NCOA7).